A 698-amino-acid chain; its full sequence is Iron-sulfur clusters transporter ATM1, mitochondrial (698 aa).

The N-terminal 23 residues, 1–23, are a transit peptide targeting the mitochondrion; the sequence is MIPQLLQRSSRACPRYNPALYRL. Topologically, residues 24–113 are mitochondrial matrix; sequence STTSQQRPGL…PKDDWGTKLR (90 aa). The interval 32–63 is disordered; that stretch reads GLTQTFWTSAPRREQPRTPTDSKPTTTKPSAV. Residues 48 to 61 are compositionally biased toward low complexity; the sequence is RTPTDSKPTTTKPS. A helical membrane pass occupies residues 114–135; it reads VSLAVSLLIGAKVLNVQVPFYF. The region spanning 114–404 is the ABC transmembrane type-1 domain; sequence VSLAVSLLIG…LGSVYRELRQ (291 aa). Residues 136 to 158 are Mitochondrial intermembrane-facing; sequence KSIVDSMNIDVAAVGGTATTVAG. Residues 159–182 traverse the membrane as a helical segment; the sequence is AMILAYGASRIGATVFQELRNAVF. Over 183 to 231 the chain is Mitochondrial matrix; the sequence is ASVAQNAIRKVACNVFDHLLRLDLTFHLSKQTGGLTRALDRGTKGISFI. Residues 232–255 form a helical membrane-spanning segment; the sequence is LSSMVFHVLPTALEISMVCGILTY. Residue Asn-256 is a topological domain, mitochondrial intermembrane. The chain crosses the membrane as a helical span at residues 257–277; it reads YGAKFAALTVLTMVSYTAFTI. The Mitochondrial matrix portion of the chain corresponds to 278–343; that stretch reads WTTAWRTKFR…NSIKVATSLA (66 aa). Residues 283–287 and 346–349 each bind glutathione; these read RTKFR and NSGQ. A helical transmembrane segment spans residues 344 to 362; it reads LLNSGQNIIFSSALTGMMY. The Mitochondrial intermembrane portion of the chain corresponds to 363–377; the sequence is LAANGVAEGTLTVGD. The chain crosses the membrane as a helical span at residues 378-399; that stretch reads LVMVNQLVFQLSVPLNFLGSVY. Glutathione is bound at residue Gly-396. Residues 400–698 lie on the Mitochondrial matrix side of the membrane; it reads RELRQSLLDM…EEENDEQKKN (299 aa). Residues 439 to 675 form the ABC transporter domain; it reads IKFENVNFAY…DGVYAELWSA (237 aa). ATP is bound by residues Tyr-448 and 472–483; that span reads GPSGCGKSTLLR. A disordered region spans residues 679 to 698; the sequence is MFGEDGKEKSEEENDEQKKN. The span at 682-698 shows a compositional bias: basic and acidic residues; it reads EDGKEKSEEENDEQKKN.

It belongs to the ABC transporter superfamily. ABCB family. Heavy Metal importer (TC 3.A.1.210) subfamily. As to quaternary structure, homodimer.

The protein localises to the mitochondrion inner membrane. Performs an essential function in the generation of cytoplasmic iron-sulfur proteins by mediating the ATP-dependent export of Fe/S cluster precursors synthesized by NFS1 and other mitochondrial proteins. Hydrolyzes ATP. Binds glutathione and may function by transporting a glutathione-conjugated iron-sulfur compound. The polypeptide is Iron-sulfur clusters transporter ATM1, mitochondrial (Gibberella zeae (strain ATCC MYA-4620 / CBS 123657 / FGSC 9075 / NRRL 31084 / PH-1) (Wheat head blight fungus)).